The following is a 50-amino-acid chain: Insulin 2 (50 aa).

3 disulfides stabilise this stretch: cysteine 8/cysteine 36, cysteine 20/cysteine 49, and cysteine 35/cysteine 40.

This sequence belongs to the insulin family. Heterodimer of a B chain and an A chain linked by two disulfide bonds.

It is found in the secreted. Insulin decreases blood glucose concentration. It increases cell permeability to monosaccharides, amino acids and fatty acids. It accelerates glycolysis, the pentose phosphate cycle, and glycogen synthesis in liver. This is Insulin 2 (ins2) from Batrachoididae sp. (Toadfish).